The sequence spans 285 residues: Eukaryotic translation initiation factor 3 subunit F-2 (285 aa).

Residues 11 to 145 form the MPN domain; it reads VYLKPLVFFQ…TRLYCAVEMG (135 aa).

Belongs to the eIF-3 subunit F family. As to quaternary structure, component of the eukaryotic translation initiation factor 3 (eIF-3) complex. The eIF-3 complex interacts with pix.

It localises to the cytoplasm. Its function is as follows. Component of the eukaryotic translation initiation factor 3 (eIF-3) complex, which is involved in protein synthesis of a specialized repertoire of mRNAs and, together with other initiation factors, stimulates binding of mRNA and methionyl-tRNAi to the 40S ribosome. The eIF-3 complex specifically targets and initiates translation of a subset of mRNAs involved in cell proliferation. The sequence is that of Eukaryotic translation initiation factor 3 subunit F-2 from Drosophila melanogaster (Fruit fly).